Reading from the N-terminus, the 386-residue chain is S-adenosylmethionine synthase (386 aa).

His16 contacts ATP. A Mg(2+)-binding site is contributed by Asp18. Glu44 serves as a coordination point for K(+). L-methionine contacts are provided by Glu57 and Gln100. Positions 100 to 110 (QSPDINQGVDQ) are flexible loop. ATP is bound by residues 164 to 166 (DGK), 230 to 231 (RF), Asp239, 245 to 246 (RK), Ala262, and Lys266. Asp239 serves as a coordination point for L-methionine. An L-methionine-binding site is contributed by Lys270.

It belongs to the AdoMet synthase family. In terms of assembly, homotetramer; dimer of dimers. The cofactor is Mg(2+). K(+) serves as cofactor.

It localises to the cytoplasm. The catalysed reaction is L-methionine + ATP + H2O = S-adenosyl-L-methionine + phosphate + diphosphate. It participates in amino-acid biosynthesis; S-adenosyl-L-methionine biosynthesis; S-adenosyl-L-methionine from L-methionine: step 1/1. Functionally, catalyzes the formation of S-adenosylmethionine (AdoMet) from methionine and ATP. The overall synthetic reaction is composed of two sequential steps, AdoMet formation and the subsequent tripolyphosphate hydrolysis which occurs prior to release of AdoMet from the enzyme. The protein is S-adenosylmethionine synthase of Nitratiruptor sp. (strain SB155-2).